A 392-amino-acid chain; its full sequence is F-box only protein 5-A (392 aa).

Positions 1–21 (MMCGFASNQSPKKLSSKKSSA) are disordered. Over residues 7–20 (SNQSPKKLSSKKSS) the composition is skewed to low complexity. The 48-residue stretch at 197-244 (AELFHRDFKHLLTKILRHLSAMDLINVISVSTTWRKLLQKDNWAYNAY) folds into the F-box domain. The segment at 319–367 (SLKVCVDCGSPAKHDPCLHRAICTRESCKLDFCTRCSCKYHFSKSCLMS) adopts a ZBR-type zinc-finger fold. Zn(2+)-binding residues include cysteine 323, cysteine 326, cysteine 341, cysteine 346, cysteine 351, cysteine 354, histidine 359, and cysteine 364.

Part of a SCF (SKP1-cullin-F-box) protein ligase complex. Interacts with btrc. Interacts with skp1. Interacts with cdc20. Interacts with pin1; stabilizes fbxo5 by preventing its association with btrc in an isomerization-dependent pathway; this interaction is present during G2 phase and prevents fbxo5 degradation. Interacts with plk1. In terms of processing, proteolysed; proteolysis is induced by both cyclin B-cdk1 and cyclin A-cdk1/2 complex through probable phosphorylation. Proteolysis is inhibited by pin1 during G2.

Its subcellular location is the nucleus. The protein localises to the cytoplasm. It localises to the cytoskeleton. The protein resides in the spindle. It is found in the microtubule organizing center. Its subcellular location is the centrosome. The protein operates within protein modification; protein ubiquitination. Functionally, regulates progression through early mitosis by inhibiting the anaphase promoting complex/cyclosome (APC). Binds to the APC activator cdc20 to prevent APC activation. Can also bind directly to the APC to inhibit substrate-binding. Required to arrest unfertilized eggs at metaphase of meiosis II, by preventing their release from metaphase of meiosis II, through inhibition of APC-dependent cyclin B destruction leading to stabilization of cyclin B-cdk1 complex activity. The protein is F-box only protein 5-A (fbxo5-a) of Xenopus laevis (African clawed frog).